The primary structure comprises 231 residues: Probable glutathione S-transferase GSTU1 (231 aa).

One can recognise a GST N-terminal domain in the interval 5-84 (KELVLLDFWV…YLDDAFPGTP (80 aa)). Glutathione-binding positions include Ser15, Lys42, Ile56, and 68–69 (ES). One can recognise a GST C-terminal domain in the interval 97-220 (AAYARATARF…LPSPEKVYDF (124 aa)).

This sequence belongs to the GST superfamily. Tau family.

The enzyme catalyses RX + glutathione = an S-substituted glutathione + a halide anion + H(+). In terms of biological role, conjugation of reduced glutathione to a wide number of exogenous and endogenous hydrophobic electrophiles. This is Probable glutathione S-transferase GSTU1 (GSTU1) from Oryza sativa subsp. japonica (Rice).